A 311-amino-acid chain; its full sequence is tRNA dimethylallyltransferase (311 aa).

19–26 (GPSGSGKS) contributes to the ATP binding site. 21 to 26 (SGSGKS) serves as a coordination point for substrate. The interaction with substrate tRNA stretch occupies residues 44–47 (DSLS).

It belongs to the IPP transferase family. As to quaternary structure, monomer. It depends on Mg(2+) as a cofactor.

The catalysed reaction is adenosine(37) in tRNA + dimethylallyl diphosphate = N(6)-dimethylallyladenosine(37) in tRNA + diphosphate. Its function is as follows. Catalyzes the transfer of a dimethylallyl group onto the adenine at position 37 in tRNAs that read codons beginning with uridine, leading to the formation of N6-(dimethylallyl)adenosine (i(6)A). In Helicobacter pylori (strain ATCC 700392 / 26695) (Campylobacter pylori), this protein is tRNA dimethylallyltransferase.